A 96-amino-acid polypeptide reads, in one-letter code: Prokineticin Bv8 (96 aa).

Residues 1-19 form the signal peptide; that stretch reads MKCFAQIVVLLLVIAFSHG. The tract at residues 20–24 is may be important for binding to prokineticin receptor 2; it reads AVITG. 5 disulfide bridges follow: Cys-26-Cys-38, Cys-32-Cys-50, Cys-37-Cys-78, Cys-60-Cys-86, and Cys-80-Cys-95.

As to expression, expressed by the skin glands.

Its subcellular location is the secreted. Potent agonist for both PKR1/PROKR1 and PKR2/PROKR2, and inducer of a potent and long-lasting hyperalgesia. Shows an EC(50) of 0.264 nM, when tested on neuroblastoma cells (SH-SY5Y) which endogenously express mainly PKR2/PROKR2. Also potentiates capsaicin-induced TRPV1 current, when tested on DRG neurons. Induces a biphasic hyperalgesia to tactile and thermal stimuli after systemic injection of this protein into rat. The initial phase of hyperalgesia is caused by a local action on nociceptors, because intraplantar injection of this protein causes a strong and localized hyperalgesia with a similar time course to that of the initial phase of hyperalgesia seen with systemic injection. The secondary phase of hyperalgesia is not seen with local intraplantar injection and is therefore probably attributable to a central action of this protein. At subnanomolar concentrations, this protein both induces potent chemotaxis of macrophages and stimulates LPS-induced production of the pro-inflammatory cytokines IL-1 and IL-12. In vivo, this protein potently stimulates the contraction of the guinea-pig gastrointestinal (GI) smooth muscle (at nanomolar concentration). The sequence is that of Prokineticin Bv8 from Bombina variegata (Yellow-bellied toad).